A 562-amino-acid chain; its full sequence is Dihydroxy-acid dehydratase (562 aa).

Aspartate 78 is a Mg(2+) binding site. Cysteine 119 is a [2Fe-2S] cluster binding site. Mg(2+) contacts are provided by aspartate 120 and lysine 121. Lysine 121 carries the post-translational modification N6-carboxylysine. Cysteine 192 is a [2Fe-2S] cluster binding site. Position 449 (glutamate 449) interacts with Mg(2+). Serine 475 acts as the Proton acceptor in catalysis.

The protein belongs to the IlvD/Edd family. As to quaternary structure, homodimer. [2Fe-2S] cluster serves as cofactor. It depends on Mg(2+) as a cofactor.

The catalysed reaction is (2R)-2,3-dihydroxy-3-methylbutanoate = 3-methyl-2-oxobutanoate + H2O. It catalyses the reaction (2R,3R)-2,3-dihydroxy-3-methylpentanoate = (S)-3-methyl-2-oxopentanoate + H2O. It functions in the pathway amino-acid biosynthesis; L-isoleucine biosynthesis; L-isoleucine from 2-oxobutanoate: step 3/4. The protein operates within amino-acid biosynthesis; L-valine biosynthesis; L-valine from pyruvate: step 3/4. Its function is as follows. Functions in the biosynthesis of branched-chain amino acids. Catalyzes the dehydration of (2R,3R)-2,3-dihydroxy-3-methylpentanoate (2,3-dihydroxy-3-methylvalerate) into 2-oxo-3-methylpentanoate (2-oxo-3-methylvalerate) and of (2R)-2,3-dihydroxy-3-methylbutanoate (2,3-dihydroxyisovalerate) into 2-oxo-3-methylbutanoate (2-oxoisovalerate), the penultimate precursor to L-isoleucine and L-valine, respectively. In Aliarcobacter butzleri (strain RM4018) (Arcobacter butzleri), this protein is Dihydroxy-acid dehydratase.